A 110-amino-acid polypeptide reads, in one-letter code: DNA-binding protein Mlab_1482 (110 aa).

The protein belongs to the PDCD5 family.

The chain is DNA-binding protein Mlab_1482 from Methanocorpusculum labreanum (strain ATCC 43576 / DSM 4855 / Z).